A 595-amino-acid polypeptide reads, in one-letter code: Thiol:disulfide interchange protein DsbD (595 aa).

An N-terminal signal peptide occupies residues Met-1–Ser-24. Cys-134 and Cys-140 are oxidised to a cystine. The interval Asn-166 to Val-186 is disordered. The next 9 membrane-spanning stretches (helical) occupy residues Ala-197–Ile-217, Ile-233–Leu-253, Tyr-270–Tyr-290, Gly-311–Cys-331, Thr-332–Gly-352, Gly-353–Phe-373, Trp-384–Leu-404, Val-411–Leu-431, and Ala-435–Ala-455. Cysteines 209 and 331 form a disulfide. Residues Leu-452–Ala-592 form the Thioredoxin domain. A disulfide bridge connects residues Cys-507 and Cys-510.

It belongs to the thioredoxin family. DsbD subfamily.

Its subcellular location is the cell inner membrane. It catalyses the reaction [protein]-dithiol + NAD(+) = [protein]-disulfide + NADH + H(+). The catalysed reaction is [protein]-dithiol + NADP(+) = [protein]-disulfide + NADPH + H(+). Functionally, required to facilitate the formation of correct disulfide bonds in some periplasmic proteins and for the assembly of the periplasmic c-type cytochromes. Acts by transferring electrons from cytoplasmic thioredoxin to the periplasm. This transfer involves a cascade of disulfide bond formation and reduction steps. This is Thiol:disulfide interchange protein DsbD from Yersinia pestis bv. Antiqua (strain Nepal516).